Consider the following 239-residue polypeptide: MKDTLFNQSLNKRFCFDEKVAHVFDDMLERSIPYYHEMLDLGAYFIAQNLKENINPKPLIYDLGCSTGNFFIALNQQIQQDIELVGIDNSMPMLKKAQEKLKDFNNARFECMDFLEVEFKEASAFSLLFVLQFVRPMQREVLLKKIYNSLALNGVLLVGEKIMSEDRILDKQMIELYYLYKQNQGYSHNEIAFKREALENVLVPYSLKENVALLESVGFKHVEALFKWVNFTLLVARKT.

S-adenosyl-L-methionine is bound by residues Y35, 64-66, 88-89, and R195; these read GCS and DN.

Belongs to the class I-like SAM-binding methyltransferase superfamily. Cx-SAM synthase family. Homodimer.

The enzyme catalyses prephenate + S-adenosyl-L-methionine = carboxy-S-adenosyl-L-methionine + 3-phenylpyruvate + H2O. Catalyzes the conversion of S-adenosyl-L-methionine (SAM) to carboxy-S-adenosyl-L-methionine (Cx-SAM). This is Carboxy-S-adenosyl-L-methionine synthase from Helicobacter pylori (strain Shi470).